The following is a 437-amino-acid chain: Phosphoglucosamine mutase (437 aa).

Ser101 acts as the Phosphoserine intermediate in catalysis. Positions 101, 234, 236, and 238 each coordinate Mg(2+). Ser101 is modified (phosphoserine).

This sequence belongs to the phosphohexose mutase family. It depends on Mg(2+) as a cofactor. Post-translationally, activated by phosphorylation.

The catalysed reaction is alpha-D-glucosamine 1-phosphate = D-glucosamine 6-phosphate. Its function is as follows. Catalyzes the conversion of glucosamine-6-phosphate to glucosamine-1-phosphate. The polypeptide is Phosphoglucosamine mutase (Thermus thermophilus (strain ATCC 27634 / DSM 579 / HB8)).